Reading from the N-terminus, the 92-residue chain is YcgL domain-containing protein Sputcn32_1766 (92 aa).

The region spanning 1-85 is the YcgL domain; it reads MLCTVYKSTR…PQVNLLAEHK (85 aa).

In Shewanella putrefaciens (strain CN-32 / ATCC BAA-453), this protein is YcgL domain-containing protein Sputcn32_1766.